Consider the following 454-residue polypeptide: Bifunctional protein GlmU (454 aa).

Positions 1 to 226 are pyrophosphorylase; that stretch reads MSTTVIILAA…AFEVEGVNDR (226 aa). UDP-N-acetyl-alpha-D-glucosamine contacts are provided by residues 8–11, Lys-22, Gln-73, 78–79, 100–102, Gly-137, Glu-151, Asn-166, and Asn-224; these read LAAG, GT, and YGD. Asp-102 provides a ligand contact to Mg(2+). A Mg(2+)-binding site is contributed by Asn-224. Residues 227-247 are linker; the sequence is LQLAALEREFQKQQAKELMQQ. An N-acetyltransferase region spans residues 248-454; sequence GVTFADPARF…NYQRPQKLKK (207 aa). Residues Arg-330 and Lys-348 each coordinate UDP-N-acetyl-alpha-D-glucosamine. The active-site Proton acceptor is His-360. Residues Tyr-363 and Asn-374 each contribute to the UDP-N-acetyl-alpha-D-glucosamine site. Acetyl-CoA is bound by residues Ala-377, 383 to 384, Ser-402, Ala-420, and Arg-437; that span reads NY.

This sequence in the N-terminal section; belongs to the N-acetylglucosamine-1-phosphate uridyltransferase family. It in the C-terminal section; belongs to the transferase hexapeptide repeat family. In terms of assembly, homotrimer. Mg(2+) serves as cofactor.

The protein localises to the cytoplasm. The enzyme catalyses alpha-D-glucosamine 1-phosphate + acetyl-CoA = N-acetyl-alpha-D-glucosamine 1-phosphate + CoA + H(+). It catalyses the reaction N-acetyl-alpha-D-glucosamine 1-phosphate + UTP + H(+) = UDP-N-acetyl-alpha-D-glucosamine + diphosphate. The protein operates within nucleotide-sugar biosynthesis; UDP-N-acetyl-alpha-D-glucosamine biosynthesis; N-acetyl-alpha-D-glucosamine 1-phosphate from alpha-D-glucosamine 6-phosphate (route II): step 2/2. It functions in the pathway nucleotide-sugar biosynthesis; UDP-N-acetyl-alpha-D-glucosamine biosynthesis; UDP-N-acetyl-alpha-D-glucosamine from N-acetyl-alpha-D-glucosamine 1-phosphate: step 1/1. Its pathway is bacterial outer membrane biogenesis; LPS lipid A biosynthesis. Its function is as follows. Catalyzes the last two sequential reactions in the de novo biosynthetic pathway for UDP-N-acetylglucosamine (UDP-GlcNAc). The C-terminal domain catalyzes the transfer of acetyl group from acetyl coenzyme A to glucosamine-1-phosphate (GlcN-1-P) to produce N-acetylglucosamine-1-phosphate (GlcNAc-1-P), which is converted into UDP-GlcNAc by the transfer of uridine 5-monophosphate (from uridine 5-triphosphate), a reaction catalyzed by the N-terminal domain. The sequence is that of Bifunctional protein GlmU from Acinetobacter baumannii (strain ACICU).